We begin with the raw amino-acid sequence, 397 residues long: Elongation factor Tu 2 (397 aa).

The tr-type G domain maps to 10 to 206 (KPHVNIGTIG…AIDTWIPEPV (197 aa)). Positions 19–26 (GHVDHGKT) are G1. 19–26 (GHVDHGKT) contacts GTP. Position 26 (threonine 26) interacts with Mg(2+). The interval 61-65 (GITIS) is G2. The tract at residues 82–85 (DCPG) is G3. Residues 82 to 86 (DCPGH) and 137 to 140 (NKCD) contribute to the GTP site. Residues 137–140 (NKCD) form a G4 region. A G5 region spans residues 175–177 (SAL).

This sequence belongs to the TRAFAC class translation factor GTPase superfamily. Classic translation factor GTPase family. EF-Tu/EF-1A subfamily. As to quaternary structure, monomer.

It localises to the cytoplasm. The enzyme catalyses GTP + H2O = GDP + phosphate + H(+). Its function is as follows. GTP hydrolase that promotes the GTP-dependent binding of aminoacyl-tRNA to the A-site of ribosomes during protein biosynthesis. The chain is Elongation factor Tu 2 from Alkaliphilus metalliredigens (strain QYMF).